Consider the following 297-residue polypeptide: Superoxide dismutase 1 copper chaperone (297 aa).

C11 lines the Cu cation pocket. Positions 222-263 (GSSCCSKKDSSPSEKPSCCSQEKKSCCSSKKPSCCSQEKKGC) are disordered. Residues 234 to 257 (SEKPSCCSQEKKSCCSSKKPSCCS) are compositionally biased toward low complexity.

This sequence belongs to the CCS1 family.

The protein resides in the cytoplasm. In terms of biological role, copper chaperone for superoxide dismutase 1 (sod1). Binds copper ions and delivers them specifically to sod1. Also has a role in cell protection against copper ion toxicity during conditions of copper excess. The C-terminal region is thought to act specifically in this sequestration role. This Schizosaccharomyces pombe (strain 972 / ATCC 24843) (Fission yeast) protein is Superoxide dismutase 1 copper chaperone (ccs1).